A 422-amino-acid chain; its full sequence is MDKLRITGGSPLRGEVTVSGAKNAALPILCASLLTAEPLVLGNVPQLNDTSTTLRLLGRMGVRAERAGDGTVTLQADQVDNLEAPYELVKTMRASILVLGPLLARFGQARVSLPGGCAIGQRPVDQHIKGLAALGAEIEIEHGFVVARATRLKGASIRTDMVTVTGTENLLMAAVLAEGQTVLENAAREPEVVDLAELLIKMGARIQGHGTDRIVVDGVARLHGARHDVIADRIEAGTFLCAVGAAGGDITLRGAAPDTMGATLDKLVEAGLTIETGPDWIRGAMHGRPRAVGARTHEYPGFATDMQAQLMALDTVADGTAVIVENIFENRYMHVQELCRLGADIDIDGHTAVVRGVARLSGATVMATDLRASASLVIAGLAAEGETLVDRIYHLDRGYDRMEVKLRALGASIQRVTGKETA.

A phosphoenolpyruvate-binding site is contributed by 22 to 23 (KN). Residue R93 participates in UDP-N-acetyl-alpha-D-glucosamine binding. C117 serves as the catalytic Proton donor. Residue C117 is modified to 2-(S-cysteinyl)pyruvic acid O-phosphothioketal. Residues 122-126 (RPVDQ), D305, and I327 each bind UDP-N-acetyl-alpha-D-glucosamine.

The protein belongs to the EPSP synthase family. MurA subfamily.

The protein localises to the cytoplasm. It catalyses the reaction phosphoenolpyruvate + UDP-N-acetyl-alpha-D-glucosamine = UDP-N-acetyl-3-O-(1-carboxyvinyl)-alpha-D-glucosamine + phosphate. The protein operates within cell wall biogenesis; peptidoglycan biosynthesis. Its function is as follows. Cell wall formation. Adds enolpyruvyl to UDP-N-acetylglucosamine. The polypeptide is UDP-N-acetylglucosamine 1-carboxyvinyltransferase (Bordetella bronchiseptica (strain ATCC BAA-588 / NCTC 13252 / RB50) (Alcaligenes bronchisepticus)).